We begin with the raw amino-acid sequence, 208 residues long: Redox-sensing transcriptional repressor Rex (208 aa).

The H-T-H motif DNA-binding region spans 16–55 (VYSRYLENLYRKGITTVSSADIAQGVGVTSAQVRKDLAYF). 90–95 (GAGNLG) contacts NAD(+).

It belongs to the transcriptional regulatory Rex family. Homodimer.

The protein localises to the cytoplasm. In terms of biological role, modulates transcription in response to changes in cellular NADH/NAD(+) redox state. This Carboxydothermus hydrogenoformans (strain ATCC BAA-161 / DSM 6008 / Z-2901) protein is Redox-sensing transcriptional repressor Rex.